A 366-amino-acid polypeptide reads, in one-letter code: NADH-quinone oxidoreductase subunit D (366 aa).

It belongs to the complex I 49 kDa subunit family. As to quaternary structure, NDH-1 is composed of 14 different subunits. Subunits NuoB, C, D, E, F, and G constitute the peripheral sector of the complex.

Its subcellular location is the cell membrane. It catalyses the reaction a quinone + NADH + 5 H(+)(in) = a quinol + NAD(+) + 4 H(+)(out). NDH-1 shuttles electrons from NADH, via FMN and iron-sulfur (Fe-S) centers, to quinones in the respiratory chain. The immediate electron acceptor for the enzyme in this species is believed to be a menaquinone. Couples the redox reaction to proton translocation (for every two electrons transferred, four hydrogen ions are translocated across the cytoplasmic membrane), and thus conserves the redox energy in a proton gradient. The protein is NADH-quinone oxidoreductase subunit D of Desulforamulus reducens (strain ATCC BAA-1160 / DSM 100696 / MI-1) (Desulfotomaculum reducens).